The sequence spans 202 residues: Endothelin-1 (202 aa).

An N-terminal signal peptide occupies residues 1–25 (MDYFPVIFSLLFVTFQGAPETAVLG). Residues 26–50 (AELSTGAENGVQSPPPSTPWRPRRS) constitute a propeptide that is removed on maturation. 2 disulfides stabilise this stretch: Cys-53/Cys-67 and Cys-55/Cys-63. Positions 74-202 (VNTPERVVPY…DQKLTHNRAH (129 aa)) are excised as a propeptide. Positions 110-124 (CQCAHQKDKKCWNFC) are endothelin-like.

This sequence belongs to the endothelin/sarafotoxin family. As to expression, highest expression in the adult is in lung. Lower levels found in heart, kidney, brain and intestine. In the embryo, expressed in outer and inner pharyngeal arch surfaces. Also expressed in endothelium of dorsal aorta and arch arteries, and in epithelium of pharyngeal pouches.

The protein resides in the secreted. In terms of biological role, endothelins are endothelium-derived vasoconstrictor peptides. Probable ligand for G-protein coupled receptors EDNRA and EDNRB which activates PTK2B, BCAR1, BCAR3 and, GTPases RAP1 and RHOA cascade in glomerular mesangial cells. Also binds the DEAR/FBXW7-AS1 receptor. Promotes mesenteric arterial wall remodeling via activation of ROCK signaling and subsequent colocalization of NFATC3 with F-actin filaments. NFATC3 then translocates to the nucleus where it subsequently promotes the transcription of the smooth muscle hypertrophy and differentiation marker ACTA2. This is Endothelin-1 (Edn1) from Mus musculus (Mouse).